A 76-amino-acid chain; its full sequence is Kappa-actitoxin-Avd4e (76 aa).

The signal sequence occupies residues 1 to 19 (MNKALFLCLVVLCAAVVFA). The propeptide occupies 20–31 (AEDLQKAKHAPF). 3 disulfides stabilise this stretch: Cys-37/Cys-72, Cys-39/Cys-65, and Cys-55/Cys-73. Positions 45-47 (RGD) match the Cell attachment site motif.

The protein belongs to the sea anemone type 3 (BDS) potassium channel toxin family. As to expression, moderately expressed in the ectodermal tissue from the distal and proximal tentacles, body wall, and oral disk.

It is found in the secreted. Its subcellular location is the nematocyst. Is member of a fraction that shows antiangiogenic activity, since it inhibits human microvascular endothelial cells (HMEC) tubulogenesis. This protein could be a kunitz-type inhibitor with a RGD motif that could block angiogenesis in binding on integrins. Blocks Kv3 voltage-gated potassium channels. Reduces blood pressure. The sequence is that of Kappa-actitoxin-Avd4e from Anemonia viridis (Snakelocks anemone).